The sequence spans 91 residues: Acylphosphatase (91 aa).

An Acylphosphatase-like domain is found at 6–91; the sequence is CMRCYISGRV…WEDYITFDVL (86 aa). Residues Arg21 and Asn39 contribute to the active site.

Belongs to the acylphosphatase family.

It carries out the reaction an acyl phosphate + H2O = a carboxylate + phosphate + H(+). The protein is Acylphosphatase (acyP) of Legionella pneumophila (strain Lens).